The following is a 2073-amino-acid chain: Dedicator of cytokinesis protein 11 (2073 aa).

Serine 12 bears the Phosphoserine mark. Position 16 is a phosphothreonine (threonine 16). Phosphoserine occurs at positions 23 and 161. The 108-residue stretch at 165–272 (GVIKQGWLHK…WLIMLKKIIQ (108 aa)) folds into the PH domain. Tyrosine 248 is modified (phosphotyrosine). A phosphoserine mark is found at serine 306 and serine 445. The 179-residue stretch at 640–818 (KNHLYVYPLQ…PLLKIKTHLE (179 aa)) folds into the C2 DOCK-type domain. Positions 1227–1267 (QNGHGIKREDSRGSLIPEGATGFPDPGSTSENTRQSSSRSS) are disordered. A phosphoserine mark is found at serine 1237 and serine 1240. The segment covering 1254 to 1267 (STSENTRQSSSRSS) has biased composition (low complexity). The 428-residue stretch at 1609 to 2036 (KSYASTPELR…LSDIIHEQIL (428 aa)) folds into the DOCKER domain.

The protein belongs to the DOCK family. Interacts with CDC42. In terms of tissue distribution, expressed in spleen, thymus, mesenteric lymph nodes (MLN), bone marrow and peripheral blood lymphocytes. Enriched in B-cells from germinal centers. Expressed in B-, T- and dendritic cells as well as Purkinje cells.

Functionally, guanine nucleotide-exchange factor (GEF) that activates CDC42 by exchanging bound GDP for free GTP. Required for marginal zone (MZ) B-cell development, is associated with early bone marrow B-cell development, MZ B-cell formation, MZ B-cell number and marginal metallophilic macrophages morphology. Facilitates filopodia formation through the activation of CDC42. In Mus musculus (Mouse), this protein is Dedicator of cytokinesis protein 11.